The primary structure comprises 315 residues: Probable cell division protein WhiA (315 aa).

A DNA-binding region (H-T-H motif) is located at residues 280–313; it reads SLKELGDLLDPPLSKSGVAYRMRKLEESVKEILQ.

It belongs to the WhiA family.

Functionally, involved in cell division and chromosome segregation. The polypeptide is Probable cell division protein WhiA (Syntrophomonas wolfei subsp. wolfei (strain DSM 2245B / Goettingen)).